The primary structure comprises 615 residues: Ankyrin repeat and LEM domain-containing protein 1 (615 aa).

3 ANK repeats span residues 39 to 71 (DGAA…DPNA), 75 to 104 (EALT…DPAL), and 108 to 137 (DGLR…RTRT). Residues 138-210 (RTRIGAETQE…DKHGSSASPP (73 aa)) are disordered. The Nuclear export signal signature appears at 271–280 (LNARLQALTL). The segment covering 283-294 (PNAAGFQSSPSS) has biased composition (polar residues). The interval 283 to 315 (PNAAGFQSSPSSMPLLDRSPAHSPPRTPTPGAS) is disordered. In terms of domain architecture, LEM spans 355–399 (HLPVSTVSDLELLKGLRALGENPHPITPFTRQLYHQQLEEAQIAP). The 119-residue stretch at 448–566 (KSSFTYLLLD…ALGIQTLTNQ (119 aa)) folds into the GIY-YIG domain. The short motif at 579–586 (PPARRRRL) is the Nuclear localization signal element.

As to quaternary structure, interacts (via LEM domain) with BANF1; the interaction may favor BANF1 dimerization. In terms of tissue distribution, expression is predominant in adult bone marrow.

It is found in the cytoplasm. Its subcellular location is the nucleus. Endonuclease that probably plays a role in the DNA damage response and DNA repair. The sequence is that of Ankyrin repeat and LEM domain-containing protein 1 (ANKLE1) from Homo sapiens (Human).